The sequence spans 540 residues: MVRTDGHTLSEKRNYQVTNSMFGASRKKFVEGVDSDYHDENMYYSQSSMFPHRSEKDMLASPSTSGQLSQFGASLYGQQSALGLPMRGMSNNTPQLNRSLSQGTQLPSHVTPTTGVPTMSLHTPPSPSRGILPMNPRNMMNHSQVGQGIGIPSRTNSMSSSGLGSPNRSSPSIICMPKQQPSRQPFTVNSMSGFGMNRNQAFGMNNSLSSNIFNGTDGSENVTGLDLSDFPALADRNRREGSGNPTPLINPLAGRAPYVGMVTKPANEQSQDFSIHNEDFPALPGSSYKDPTSSNDDSKSNLSTSGKTTSSTDGPKFPGDKSSTTQNNNQQKKGIQVLPDGRVTNIPQGMVTDQFGMIGLLTFIRAAETDPGMVHLALGSDLTTLGLNLNSPENLYPKFASPWASSPCRPQDIDFHVPSEYLTNIHIRDKLAAIKLGRYGEDLLFYLYYMNGGDVLQLLAAVELFNRDWRYHKEERVWITRAPGMEPTMKTNTYERGTYYFFDCLNWRKVAKEFHLEYDKLEERPHLPSTFNYNPAQQAF.

Threonine 93 carries the post-translational modification Phosphothreonine. Residues leucine 96–threonine 123 show a composition bias toward polar residues. Positions leucine 96–serine 126 are disordered. Phosphoserine occurs at positions 126, 157, 165, 169, 242, and 274. Residues histidine 276–arginine 342 are disordered. Residues serine 300–threonine 312 are compositionally biased toward low complexity. A compositionally biased stretch (polar residues) spans lysine 321–lysine 333.

This sequence belongs to the CNOT2/3/5 family. Component of the CCR4-NOT complex; distinct complexes seem to exist that differ in the participation of probably mutually exclusive catalytic subunits. In the complex interacts directly with CNOT3. Interacts with NCOR1, NCOR2. HDAC3 and GPS2.

The protein resides in the cytoplasm. It is found in the nucleus. Functionally, component of the CCR4-NOT complex which is one of the major cellular mRNA deadenylases and is linked to various cellular processes including bulk mRNA degradation, miRNA-mediated repression, translational repression during translational initiation and general transcription regulation. Additional complex functions may be a consequence of its influence on mRNA expression. Required for the CCR4-NOT complex structural integrity. Can repress transcription and may link the CCR4-NOT complex to transcriptional regulation; the repressive function may specifically involve the N-Cor repressor complex containing HDAC3, NCOR1 and NCOR2. Involved in the maintenance of embryonic stem (ES) cell identity; prevents their differentiation towards extraembryonic trophectoderm lineages. The chain is CCR4-NOT transcription complex subunit 2 (Cnot2) from Mus musculus (Mouse).